Here is a 345-residue protein sequence, read N- to C-terminus: Biotin synthase (345 aa).

One can recognise a Radical SAM core domain in the interval 38–256; the sequence is GEVQVSTLLS…IAVARIMMPR (219 aa). 3 residues coordinate [4Fe-4S] cluster: Cys53, Cys57, and Cys60. Residues Cys97, Cys128, Cys188, and Arg260 each coordinate [2Fe-2S] cluster.

It belongs to the radical SAM superfamily. Biotin synthase family. Homodimer. It depends on [4Fe-4S] cluster as a cofactor. The cofactor is [2Fe-2S] cluster.

It catalyses the reaction (4R,5S)-dethiobiotin + (sulfur carrier)-SH + 2 reduced [2Fe-2S]-[ferredoxin] + 2 S-adenosyl-L-methionine = (sulfur carrier)-H + biotin + 2 5'-deoxyadenosine + 2 L-methionine + 2 oxidized [2Fe-2S]-[ferredoxin]. It participates in cofactor biosynthesis; biotin biosynthesis; biotin from 7,8-diaminononanoate: step 2/2. Catalyzes the conversion of dethiobiotin (DTB) to biotin by the insertion of a sulfur atom into dethiobiotin via a radical-based mechanism. In Sodalis glossinidius (strain morsitans), this protein is Biotin synthase.